A 152-amino-acid chain; its full sequence is Cytochrome c-type biogenesis CcmH-like mitochondrial protein (152 aa).

Residues 1–83 are Mitochondrial intermembrane-facing; sequence MATEEDVKQR…ILYTPKFDLQ (83 aa). Cys-26 and Cys-29 together coordinate heme. The helical transmembrane segment at 84-104 threads the bilayer; that stretch reads TAAIWLSPVIVGGVAAGVWAY. Topologically, residues 105–152 are mitochondrial matrix; it reads KKHRQRTNVHIMALNLVRGVPLTPREKETMLDVLTPPPPANKWWWPGK.

It belongs to the CcmH/CycL/Ccl2/NrfF family.

It localises to the mitochondrion inner membrane. In terms of biological role, plays a role in mitochondrial cytochrome c maturation. Probable component of a heme lyase complex involved in the reduction of apocytochrome c. The chain is Cytochrome c-type biogenesis CcmH-like mitochondrial protein from Oryza sativa subsp. indica (Rice).